The following is a 175-amino-acid chain: ATP synthase subunit b (175 aa).

The chain crosses the membrane as a helical span at residues 19 to 35 (GLIFWTTVTFLIVLFIL).

The protein belongs to the ATPase B chain family. As to quaternary structure, F-type ATPases have 2 components, F(1) - the catalytic core - and F(0) - the membrane proton channel. F(1) has five subunits: alpha(3), beta(3), gamma(1), delta(1), epsilon(1). F(0) has four main subunits: a(1), b(2) and c(10-14). The alpha and beta chains form an alternating ring which encloses part of the gamma chain. F(1) is attached to F(0) by a central stalk formed by the gamma and epsilon chains, while a peripheral stalk is formed by the delta and b chains.

The protein resides in the cell inner membrane. Functionally, f(1)F(0) ATP synthase produces ATP from ADP in the presence of a proton or sodium gradient. F-type ATPases consist of two structural domains, F(1) containing the extramembraneous catalytic core and F(0) containing the membrane proton channel, linked together by a central stalk and a peripheral stalk. During catalysis, ATP synthesis in the catalytic domain of F(1) is coupled via a rotary mechanism of the central stalk subunits to proton translocation. Its function is as follows. Component of the F(0) channel, it forms part of the peripheral stalk, linking F(1) to F(0). In Chlorobium phaeobacteroides (strain BS1), this protein is ATP synthase subunit b.